A 367-amino-acid polypeptide reads, in one-letter code: Probable butyrate kinase (367 aa).

This sequence belongs to the acetokinase family.

The protein localises to the cytoplasm. The enzyme catalyses butanoate + ATP = butanoyl phosphate + ADP. This Bacillus cereus (strain Q1) protein is Probable butyrate kinase.